The primary structure comprises 198 residues: Protein GrpE (198 aa).

The protein belongs to the GrpE family. As to quaternary structure, homodimer.

It localises to the cytoplasm. Its function is as follows. Participates actively in the response to hyperosmotic and heat shock by preventing the aggregation of stress-denatured proteins, in association with DnaK and GrpE. It is the nucleotide exchange factor for DnaK and may function as a thermosensor. Unfolded proteins bind initially to DnaJ; upon interaction with the DnaJ-bound protein, DnaK hydrolyzes its bound ATP, resulting in the formation of a stable complex. GrpE releases ADP from DnaK; ATP binding to DnaK triggers the release of the substrate protein, thus completing the reaction cycle. Several rounds of ATP-dependent interactions between DnaJ, DnaK and GrpE are required for fully efficient folding. This is Protein GrpE from Lysinibacillus sphaericus (Bacillus sphaericus).